A 127-amino-acid chain; its full sequence is Evasin-4 (127 aa).

An N-terminal signal peptide occupies residues 1–23; the sequence is MAFKYWFVFAAVLYARQWLSTKC. 4 disulfide bridges follow: Cys-50-Cys-69, Cys-65-Cys-112, Cys-86-Cys-117, and Cys-107-Cys-126. Residues Asn-54, Asn-64, Asn-70, Asn-77, Asn-83, Asn-106, and Asn-114 are each glycosylated (N-linked (GlcNAc...) asparagine).

It belongs to the evasin C8 family. In terms of assembly, monomer.

The protein resides in the secreted. Its function is as follows. Salivary chemokine-binding protein which has chemokine-neutralizing activity and binds to host chemokines CCL1, CCL3, CCL5, CCL7, CCL8, CCL11, CCL14, CCL15, CCL16, CCL17, CCL18, CCL19, CCL21, CCL22, CCL23, CCL24, CCL25 and CCL26 with nanomolar affinity. Binds to CCL3 and CCL5 with 1:1 stoichiometry. Although binding to CCL25 is observed, does not inhibit CCL25-induced chemotaxis. Has been shown to reduce cardiac injury and inflammation in mice through its anti-CCL5 activity. The chain is Evasin-4 from Rhipicephalus sanguineus (Brown dog tick).